The chain runs to 545 residues: MLPINNNFSLPQNSFYNTISGTYADYFSAWDKWEKQALPGEERDEAVSRLKECLINNSDELRLDRLNLSSLPDNLPAQITLLNVSYNQLTNLPELPVTLKKLYSASNKLSELPVLPPALESLQVQHNELENLPALPDSLLTMNISYNEIVSLPSLPQALKNLRATRNFLTELPAFSEGNNPVVREYFFDRNQISHIPESILNLRNECSIHISDNPLSSHALQALQRLTSSPDYHGPRIYFSMSDGQQNTLHRPLADAVTAWFPENKQSDVSQIWHAFEHEEHANTFSAFLDRLSDTVSARNTSGFREQVAAWLEKLSASAELRQQSFAVAADATESCEDRVALTWNNLRKTLLVHQASEGLFDNDTGALLSLGREMFRLEILEDIARDKVRTLHFVDEIEVYLAFQTMLAEKLQLSTAVKEMRFYGVSGVTANDLRTAEAMVRSREENEFKDWFSLWGPWHAVLKRTEADRWAQAEEQKYEMLENEYPQRVADRLKASGLSGDADAEREAGAQVMRETEQLIYRQLTDEVLALRLSENGSQLHHS.

The interaction with target proteins stretch occupies residues 1 to 242; it reads MLPINNNFSL…YHGPRIYFSM (242 aa). LRR repeat units lie at residues 57-77, 78-99, 100-117, 118-139, 140-157, 158-179, 182-203, and 205-228; these read NSDE…NLPA, QITL…PVTL, KKLY…VLPP, ALES…PDSL, LTMN…SLPQ, ALKN…SEGN, VVRE…ILNL, and NECS…QRLT. The linker stretch occupies residues 243 to 250; the sequence is SDGQQNTL. An E3 ubiquitin-protein ligase catalytic domain region spans residues 251–545; it reads HRPLADAVTA…SENGSQLHHS (295 aa). One can recognise an NEL domain in the interval 253–545; the sequence is PLADAVTAWF…SENGSQLHHS (293 aa). The Glycyl thioester intermediate role is filled by C337.

This sequence belongs to the LRR-containing bacterial E3 ligase family. Also interacts with human and mouse U2AF1 (U2AF35). Ubiquitinated in the presence of host E1 ubiquitin-activating enzyme, E2 ubiquitin-conjugating enzyme and ubiquitin.

The protein localises to the secreted. Its subcellular location is the host cytoplasm. It localises to the host nucleus. It carries out the reaction S-ubiquitinyl-[E2 ubiquitin-conjugating enzyme]-L-cysteine + [acceptor protein]-L-lysine = [E2 ubiquitin-conjugating enzyme]-L-cysteine + N(6)-ubiquitinyl-[acceptor protein]-L-lysine.. With respect to regulation, exists in an autoinhibited state in the absence of substrate protein, due to interactions of the leucine-rich repeats with NEL domain. Is activated upon binding to a substrate protein. Functionally, effector E3 ubiquitin ligase that interferes with host's ubiquitination pathway and modulates the acute inflammatory responses, thus facilitating bacterial colonization within the host cell. Interacts with IKBKG (NEMO) and TNIP1 (ABIN-1), a ubiquitin-binding adapter protein, which results in TNIP1-dependent 'Lys-27'-linked polyubiquitination of IKBKG. Consequently, polyubiquitinated IKBKG undergoes proteasome-dependent degradation, which perturbs NF-kappa-B activation during bacterial infection. Mediates polyubiquitination of host U2AF1, leading to its proteasomal degradation. Catalyzes 'Lys-48'-linked polyubiquitination and subsequent degradation of a subset of host guanylate-binding proteins (GBP1, GBP2, GBP4 and GBP6), thereby suppressing host cell defense. In contrast, host GBP3 and GBP7 are not ubiquitinated by IpaH9.8. Uses UBE2D2 (UBCH5B) as an E2 ubiquitin-conjugating enzyme. This Shigella boydii serotype 18 (strain CDC 3083-94 / BS512) protein is E3 ubiquitin-protein ligase ipaH9.8 (ipaH9.8).